Here is a 250-residue protein sequence, read N- to C-terminus: Cobalt transport protein CbiM (250 aa).

The first 25 residues, 1 to 25 (MKQNIKLGVIAALMLIVLTPVTSNA), serve as a signal peptide directing secretion. The next 6 helical transmembrane spans lie at 33-53 (LPVK…LVGL), 68-88 (VLLA…IPSV), 100-120 (LGAI…VLIF), 132-152 (TLGA…FLIF), 163-183 (AMPV…VTSI), and 205-225 (GIFF…TVIV).

Belongs to the CbiM family. Forms an energy-coupling factor (ECF) transporter complex composed of an ATP-binding protein (A component, CbiO), a transmembrane protein (T component, CbiQ) and 2 possible substrate-capture proteins (S components, CbiM and CbiN) of unknown stoichimetry.

It is found in the cell membrane. It participates in cofactor biosynthesis; adenosylcobalamin biosynthesis. Part of the energy-coupling factor (ECF) transporter complex CbiMNOQ involved in cobalt import. The polypeptide is Cobalt transport protein CbiM (Clostridioides difficile (strain R20291) (Peptoclostridium difficile)).